The primary structure comprises 331 residues: Thiamine thiazole synthase (331 aa).

Substrate is bound by residues Ser-82, 103–104 (EA), Gly-111, and Val-176. Position 210 is a 2,3-didehydroalanine (Cys) (Cys-210). Substrate-binding positions include Asp-212, His-242, Met-296, and 306–308 (RMG).

It belongs to the THI4 family. In terms of assembly, homooctamer. It depends on Fe cation as a cofactor. Post-translationally, during the catalytic reaction, a sulfide is transferred from Cys-210 to a reaction intermediate, generating a dehydroalanine residue.

It is found in the cytoplasm. Its subcellular location is the nucleus. It catalyses the reaction [ADP-thiazole synthase]-L-cysteine + glycine + NAD(+) = [ADP-thiazole synthase]-dehydroalanine + ADP-5-ethyl-4-methylthiazole-2-carboxylate + nicotinamide + 3 H2O + 2 H(+). Involved in biosynthesis of the thiamine precursor thiazole. Catalyzes the conversion of NAD and glycine to adenosine diphosphate 5-(2-hydroxyethyl)-4-methylthiazole-2-carboxylic acid (ADT), an adenylated thiazole intermediate. The reaction includes an iron-dependent sulfide transfer from a conserved cysteine residue of the protein to a thiazole intermediate. The enzyme can only undergo a single turnover, which suggests it is a suicide enzyme. May have additional roles in adaptation to various stress conditions and in DNA damage tolerance. The sequence is that of Thiamine thiazole synthase from Eremothecium gossypii (strain ATCC 10895 / CBS 109.51 / FGSC 9923 / NRRL Y-1056) (Yeast).